Consider the following 283-residue polypeptide: Pantothenate synthetase (283 aa).

Position 31-38 (31-38) interacts with ATP; the sequence is MGALHDGH. H38 serves as the catalytic Proton donor. Residue Q62 participates in (R)-pantoate binding. Position 62 (Q62) interacts with beta-alanine. Residue 148–151 participates in ATP binding; sequence GKKD. Q154 contacts (R)-pantoate. ATP contacts are provided by residues V177 and 185-188; that span reads KSSR.

The protein belongs to the pantothenate synthetase family. As to quaternary structure, homodimer.

It localises to the cytoplasm. It catalyses the reaction (R)-pantoate + beta-alanine + ATP = (R)-pantothenate + AMP + diphosphate + H(+). Its pathway is cofactor biosynthesis; (R)-pantothenate biosynthesis; (R)-pantothenate from (R)-pantoate and beta-alanine: step 1/1. In terms of biological role, catalyzes the condensation of pantoate with beta-alanine in an ATP-dependent reaction via a pantoyl-adenylate intermediate. The sequence is that of Pantothenate synthetase from Staphylococcus aureus (strain USA300).